Reading from the N-terminus, the 108-residue chain is METSNLISYDDVIDAAYDIFLEMASESLEPVDVILFTAQFDDRGAAEAVETRDDWSSHVGFDVDKELYAEVRIGLVNEENDQLDDVFARMLISRDPDHKFCHILWKRD.

It belongs to the putative dsDNA mimic protein family.

Its function is as follows. May act as a double-stranded DNA (dsDNA) mimic. Probably regulates the activity of a dsDNA-binding protein. This Photobacterium profundum (strain SS9) protein is Putative double-stranded DNA mimic protein PBPRA1522.